We begin with the raw amino-acid sequence, 136 residues long: MGKIMKPGKVVLVLRGKYAGRKAVVVKQQDEGVSDRTYPHAIIAGIDRYPLKVTKDMGKKKIEKRNKLKPFLKVVSYTHLLPTRYSVDVAFDKTNINKEALKAPSKKRKALVEVKSKFEERYKTGKNKWFFTKLRF.

The region spanning 5 to 36 (MKPGKVVLVLRGKYAGRKAVVVKQQDEGVSDR) is the KOW domain.

Belongs to the eukaryotic ribosomal protein eL27 family. As to quaternary structure, component of the large ribosomal subunit.

The protein resides in the cytoplasm. The protein localises to the cytosol. Its subcellular location is the rough endoplasmic reticulum. In terms of biological role, component of the large ribosomal subunit. In Caenorhabditis elegans, this protein is Large ribosomal subunit protein eL27 (rpl-27).